The primary structure comprises 219 residues: 7-cyano-7-deazaguanine synthase (219 aa).

10 to 20 (FSGGQDSTTCL) contacts ATP. Zn(2+) is bound by residues Cys188, Cys197, Cys200, and Cys203.

Belongs to the QueC family. Homodimer. The cofactor is Zn(2+).

It catalyses the reaction 7-carboxy-7-deazaguanine + NH4(+) + ATP = 7-cyano-7-deazaguanine + ADP + phosphate + H2O + H(+). The protein operates within purine metabolism; 7-cyano-7-deazaguanine biosynthesis. Its function is as follows. Catalyzes the ATP-dependent conversion of 7-carboxy-7-deazaguanine (CDG) to 7-cyano-7-deazaguanine (preQ(0)). The chain is 7-cyano-7-deazaguanine synthase from Clostridium botulinum (strain 657 / Type Ba4).